Here is a 196-residue protein sequence, read N- to C-terminus: UPF0056 membrane protein BU449 (196 aa).

6 consecutive transmembrane segments (helical) span residues 8–28, 45–65, 71–91, 105–125, 134–154, and 174–194; these read TILLVLIMDPLGNLPIFMTIL, IIALIVMLLFLFVGEKILIIL, TVSISGGVILFLIAIKMIFPS, FLVPLAIPLVAGPSLLATLML, MFYLVGSLLISWFFTVIILLS, and MGLVLIMLSTQMFLDGIRAWF.

The protein belongs to the UPF0056 (MarC) family.

The protein localises to the cell membrane. The sequence is that of UPF0056 membrane protein BU449 from Buchnera aphidicola subsp. Acyrthosiphon pisum (strain APS) (Acyrthosiphon pisum symbiotic bacterium).